The primary structure comprises 191 residues: Potassium-transporting ATPase KdpC subunit (191 aa).

Residues 6–26 form a helical membrane-spanning segment; it reads PAILLFILLTLVTGGLYPLLT.

This sequence belongs to the KdpC family. As to quaternary structure, the system is composed of three essential subunits: KdpA, KdpB and KdpC.

It is found in the cell inner membrane. Part of the high-affinity ATP-driven potassium transport (or Kdp) system, which catalyzes the hydrolysis of ATP coupled with the electrogenic transport of potassium into the cytoplasm. This subunit acts as a catalytic chaperone that increases the ATP-binding affinity of the ATP-hydrolyzing subunit KdpB by the formation of a transient KdpB/KdpC/ATP ternary complex. The protein is Potassium-transporting ATPase KdpC subunit of Enterobacter sp. (strain 638).